Reading from the N-terminus, the 579-residue chain is Carotenoid-cleaving dioxygenase, mitochondrial (579 aa).

His226, His286, His357, and His573 together coordinate Fe cation.

The protein belongs to the carotenoid oxygenase family. Fe(2+) is required as a cofactor. Highly expressed in retinal pigment epithelium. Also expressed in stomach, small intestine, liver, testis, kidney, adrenal gland, pancreas, heart, skeletal muscle and prostate (at protein level).

Its subcellular location is the mitochondrion. It carries out the reaction all-trans-beta-carotene + O2 = beta-ionone + all-trans-10'-apo-beta-carotenal. The catalysed reaction is 5-cis-lycopene + O2 = 5-cis-10'-apo-lycopenal + (3E,5E)-6,10-dimethylundeca-3,5,9-trien-2-one. It catalyses the reaction 13-cis-lycopene + O2 = 13-cis-10'-apo-lycopenal + (3E,5E)-6,10-dimethylundeca-3,5,9-trien-2-one. The enzyme catalyses lutein + O2 = (3R,6R)-hydroxy-alpha-ionone + (3R)-3-hydroxy-10'-apo-beta-carotenal. It carries out the reaction lutein + O2 = (3R,6R)-3-hydroxy-10'-apo-alpha-carotenal + (3R)-hydroxy-beta-ionone. The catalysed reaction is all-trans-zeaxanthin + 2 O2 = 4,9-dimethyldodeca-2,4,6,8,10-pentaenedial + 2 (3R)-hydroxy-beta-ionone. It catalyses the reaction all-trans-zeaxanthin + O2 = (3R)-3-hydroxy-10'-apo-beta-carotenal + (3R)-hydroxy-beta-ionone. The enzyme catalyses beta-cryptoxanthin + O2 = all-trans-10'-apo-beta-carotenal + (3R)-hydroxy-beta-ionone. It carries out the reaction all-trans-10'-apo-beta-carotenal + O2 = beta-ionone + 4,9-dimethyldodeca-2,4,6,8,10-pentaenedial. The catalysed reaction is (3R)-3-hydroxy-10'-apo-beta-carotenal + O2 = 4,9-dimethyldodeca-2,4,6,8,10-pentaenedial + (3R)-hydroxy-beta-ionone. It catalyses the reaction (3R,6R)-3-hydroxy-10'-apo-alpha-carotenal + O2 = (3R,6R)-hydroxy-alpha-ionone + 4,9-dimethyldodeca-2,4,6,8,10-pentaenedial. Broad specificity mitochondrial dioxygenase that mediates the asymmetric oxidative cleavage of carotenoids. Cleaves carotenes (pure hydrocarbon carotenoids) such as all-trans-beta-carotene and lycopene as well as xanthophylls (oxygenated carotenoids) such as zeaxanthin, lutein and beta-cryptoxanthin at both the 9,10 and the 9',10' carbon-carbon double bond. Through its function in carotenoids metabolism regulates oxidative stress and the production of important signaling molecules. In Homo sapiens (Human), this protein is Carotenoid-cleaving dioxygenase, mitochondrial.